We begin with the raw amino-acid sequence, 512 residues long: Zinc finger CCCH-type with G patch domain-containing protein (512 aa).

The segment at 159–186 (QEMVPCAYFLEGDCKFNDEMCRFSHGEL) adopts a C3H1-type zinc-finger fold. A disordered region spans residues 255–280 (LEGDDVPSSDSESNSDSDEENEDDVV). Residues 256–279 (EGDDVPSSDSESNSDSDEENEDDV) show a composition bias toward acidic residues. The G-patch domain maps to 308–354 (TKGIGSKIMLKMGYVVGAGLGSKGEGIVVPVSAQVLPQGRSLDYCMQ). Residues 407-417 (SSNGSSSSSGS) are compositionally biased toward low complexity. The segment at 407-432 (SSNGSSSSSGSKKPAAKDNQMDLPSC) is disordered.

It localises to the nucleus. Its function is as follows. Transcription repressor. This Aedes aegypti (Yellowfever mosquito) protein is Zinc finger CCCH-type with G patch domain-containing protein.